The sequence spans 608 residues: Phosphogluconate dehydratase (608 aa).

Residues Cys154 and Cys221 each contribute to the [4Fe-4S] cluster site.

Belongs to the IlvD/Edd family. The cofactor is [4Fe-4S] cluster.

It catalyses the reaction 6-phospho-D-gluconate = 2-dehydro-3-deoxy-6-phospho-D-gluconate + H2O. The protein operates within carbohydrate metabolism; Entner-Doudoroff pathway. Functionally, catalyzes the dehydration of 6-phospho-D-gluconate to 2-dehydro-3-deoxy-6-phospho-D-gluconate. In Helicobacter pylori (strain J99 / ATCC 700824) (Campylobacter pylori J99), this protein is Phosphogluconate dehydratase.